The chain runs to 358 residues: MVEINKVAILGAGCWRTHAATGITTFKRACEVADETGIKEAALTHSSVTYAVELKHLAGVDEVVLSDPVFDADGFTVVDIEEDCDVDLDEFIKAHLEGNPEDVMPKLRDYVNDIADDVPKPPKGAIHFLSPEEMEDKLDIVVTTDDAEAVEDADMIISWLPKGGVQPDIFKKIIDDIPEGCIVANTCTIPTRQFKEMFEDMGRDDLQVTSYHPATVPEHKGQVFVAEGYADEEVVEAVYELGEKARGLAFKVPGYLLGPVCDMASAVTAIVYAGLLTFRDACTDILGAPVDFTQNMAVEALQMMAKFMEEEGLDKLEEALDPAALTNTADSMNFGPLADTEILPKALEVLEKYSKKAE.

This sequence belongs to the HMD family. As to quaternary structure, homotetramer.

The catalysed reaction is 5,10-methenyl-5,6,7,8-tetrahydromethanopterin + H2 = 5,10-methylenetetrahydromethanopterin + H(+). Its pathway is one-carbon metabolism; methanogenesis from CO(2); 5,10-methylene-5,6,7,8-tetrahydromethanopterin from 5,10-methenyl-5,6,7,8-tetrahydromethanopterin (hydrogen route): step 1/1. With respect to regulation, activity requires salt; 100 mM potassium phosphate, potassium chloride, and sodium chloride are equally effective. Its function is as follows. Catalyzes the reversible reduction of methenyl-H(4)MPT(+) to methylene-H(4)MPT. The sequence is that of 5,10-methenyltetrahydromethanopterin hydrogenase from Methanopyrus kandleri (strain AV19 / DSM 6324 / JCM 9639 / NBRC 100938).